Here is a 550-residue protein sequence, read N- to C-terminus: Arginine--tRNA ligase (550 aa).

A 'HIGH' region motif is present at residues 130-140; sequence ANPTGPIHIGG.

It belongs to the class-I aminoacyl-tRNA synthetase family. In terms of assembly, monomer.

The protein localises to the cytoplasm. It catalyses the reaction tRNA(Arg) + L-arginine + ATP = L-arginyl-tRNA(Arg) + AMP + diphosphate. The chain is Arginine--tRNA ligase from Mycolicibacterium gilvum (strain PYR-GCK) (Mycobacterium gilvum (strain PYR-GCK)).